The following is a 101-amino-acid chain: Urease subunit gamma (101 aa).

This sequence belongs to the urease gamma subunit family. In terms of assembly, heterotrimer of UreA (gamma), UreB (beta) and UreC (alpha) subunits. Three heterotrimers associate to form the active enzyme.

The protein resides in the cytoplasm. It catalyses the reaction urea + 2 H2O + H(+) = hydrogencarbonate + 2 NH4(+). The protein operates within nitrogen metabolism; urea degradation; CO(2) and NH(3) from urea (urease route): step 1/1. In Ureaplasma parvum serovar 3 (strain ATCC 27815 / 27 / NCTC 11736), this protein is Urease subunit gamma.